We begin with the raw amino-acid sequence, 207 residues long: Octanoyltransferase (207 aa).

One can recognise a BPL/LPL catalytic domain in the interval 27–203 (ADTEDELWVV…HLETQLTPKA (177 aa)). Substrate contacts are provided by residues 66 to 73 (RGGQITYH), 133 to 135 (SLG), and 146 to 148 (GLA). Cysteine 164 functions as the Acyl-thioester intermediate in the catalytic mechanism.

The protein belongs to the LipB family.

It is found in the cytoplasm. The catalysed reaction is octanoyl-[ACP] + L-lysyl-[protein] = N(6)-octanoyl-L-lysyl-[protein] + holo-[ACP] + H(+). It functions in the pathway protein modification; protein lipoylation via endogenous pathway; protein N(6)-(lipoyl)lysine from octanoyl-[acyl-carrier-protein]: step 1/2. In terms of biological role, catalyzes the transfer of endogenously produced octanoic acid from octanoyl-acyl-carrier-protein onto the lipoyl domains of lipoate-dependent enzymes. Lipoyl-ACP can also act as a substrate although octanoyl-ACP is likely to be the physiological substrate. This chain is Octanoyltransferase, found in Neisseria gonorrhoeae (strain ATCC 700825 / FA 1090).